The following is a 249-amino-acid chain: 1-(5-phosphoribosyl)-5-[(5-phosphoribosylamino)methylideneamino] imidazole-4-carboxamide isomerase (249 aa).

Asp8 acts as the Proton acceptor in catalysis. Catalysis depends on Asp130, which acts as the Proton donor.

It belongs to the HisA/HisF family.

It localises to the cytoplasm. The catalysed reaction is 1-(5-phospho-beta-D-ribosyl)-5-[(5-phospho-beta-D-ribosylamino)methylideneamino]imidazole-4-carboxamide = 5-[(5-phospho-1-deoxy-D-ribulos-1-ylimino)methylamino]-1-(5-phospho-beta-D-ribosyl)imidazole-4-carboxamide. It functions in the pathway amino-acid biosynthesis; L-histidine biosynthesis; L-histidine from 5-phospho-alpha-D-ribose 1-diphosphate: step 4/9. In Nitrosococcus oceani (strain ATCC 19707 / BCRC 17464 / JCM 30415 / NCIMB 11848 / C-107), this protein is 1-(5-phosphoribosyl)-5-[(5-phosphoribosylamino)methylideneamino] imidazole-4-carboxamide isomerase.